The sequence spans 258 residues: Imidazole glycerol phosphate synthase subunit HisF (258 aa).

Catalysis depends on residues Asp11 and Asp130.

Belongs to the HisA/HisF family. Heterodimer of HisH and HisF.

It is found in the cytoplasm. The enzyme catalyses 5-[(5-phospho-1-deoxy-D-ribulos-1-ylimino)methylamino]-1-(5-phospho-beta-D-ribosyl)imidazole-4-carboxamide + L-glutamine = D-erythro-1-(imidazol-4-yl)glycerol 3-phosphate + 5-amino-1-(5-phospho-beta-D-ribosyl)imidazole-4-carboxamide + L-glutamate + H(+). It functions in the pathway amino-acid biosynthesis; L-histidine biosynthesis; L-histidine from 5-phospho-alpha-D-ribose 1-diphosphate: step 5/9. IGPS catalyzes the conversion of PRFAR and glutamine to IGP, AICAR and glutamate. The HisF subunit catalyzes the cyclization activity that produces IGP and AICAR from PRFAR using the ammonia provided by the HisH subunit. The polypeptide is Imidazole glycerol phosphate synthase subunit HisF (Lachnoclostridium phytofermentans (strain ATCC 700394 / DSM 18823 / ISDg) (Clostridium phytofermentans)).